The sequence spans 319 residues: Probable arabinan endo-1,5-alpha-L-arabinosidase A (319 aa).

An N-terminal signal peptide occupies residues 1 to 19; it reads MYLQSSLALVLLRAAVVHG. D34 (proton acceptor) is an active-site residue. The N-linked (GlcNAc...) asparagine glycan is linked to N53. E198 functions as the Proton donor in the catalytic mechanism.

The protein belongs to the glycosyl hydrolase 43 family.

Its subcellular location is the secreted. It carries out the reaction Endohydrolysis of (1-&gt;5)-alpha-arabinofuranosidic linkages in (1-&gt;5)-arabinans.. It functions in the pathway glycan metabolism; L-arabinan degradation. Endo-1,5-alpha-L-arabinanase involved in degradation of pectin. Its preferred substrate is linear 1,5-alpha-L-arabinan. The chain is Probable arabinan endo-1,5-alpha-L-arabinosidase A (abnA) from Aspergillus flavus (strain ATCC 200026 / FGSC A1120 / IAM 13836 / NRRL 3357 / JCM 12722 / SRRC 167).